The following is a 393-amino-acid chain: Methylthioribose kinase (393 aa).

ATP-binding positions include Asn38, Lys53, and 107 to 109 (EDL). Substrate is bound at residue Asp225. 242–244 (DPE) contributes to the ATP binding site. Residue Arg332 participates in substrate binding.

Belongs to the methylthioribose kinase family. In terms of assembly, homodimer.

The enzyme catalyses 5-(methylsulfanyl)-D-ribose + ATP = 5-(methylsulfanyl)-alpha-D-ribose 1-phosphate + ADP + H(+). Its pathway is amino-acid biosynthesis; L-methionine biosynthesis via salvage pathway; S-methyl-5-thio-alpha-D-ribose 1-phosphate from S-methyl-5'-thioadenosine (hydrolase route): step 2/2. Its function is as follows. Catalyzes the phosphorylation of methylthioribose into methylthioribose-1-phosphate. The sequence is that of Methylthioribose kinase from Bacillus cereus (strain B4264).